Here is a 314-residue protein sequence, read N- to C-terminus: Dioxygenase easH (314 aa).

The Fe cation site is built by histidine 141, aspartate 143, and histidine 217.

Belongs to the PhyH family. In terms of assembly, homodimer. Fe cation serves as cofactor.

The protein operates within alkaloid biosynthesis; ergot alkaloid biosynthesis. Its function is as follows. Dioxygenase; part of the gene cluster that mediates the biosynthesis of fungal ergot alkaloid. DmaW catalyzes the first step of ergot alkaloid biosynthesis by condensing dimethylallyl diphosphate (DMAP) and tryptophan to form 4-dimethylallyl-L-tryptophan. The second step is catalyzed by the methyltransferase easF that methylates 4-dimethylallyl-L-tryptophan in the presence of S-adenosyl-L-methionine, resulting in the formation of 4-dimethylallyl-L-abrine. The catalase easC and the FAD-dependent oxidoreductase easE then transform 4-dimethylallyl-L-abrine to chanoclavine-I which is further oxidized by easD in the presence of NAD(+), resulting in the formation of chanoclavine-I aldehyde. Agroclavine dehydrogenase easG then mediates the conversion of chanoclavine-I aldehyde to agroclavine via a non-enzymatic adduct reaction: the substrate is an iminium intermediate that is formed spontaneously from chanoclavine-I aldehyde in the presence of glutathione. The presence of easA is not required to complete this reaction. Further conversion of agroclavine to paspalic acid is a two-step process involving oxidation of agroclavine to elymoclavine and of elymoclavine to paspalic acid, the second step being performed by the elymoclavine oxidase cloA. Paspalic acid is then further converted to D-lysergic acid. Ergopeptines are assembled from D-lysergic acid and three different amino acids by the D-lysergyl-peptide-synthetases composed each of a monomudular and a trimodular nonribosomal peptide synthetase subunit. LpsB and lpsC encode the monomodular subunits responsible for D-lysergic acid activation and incorporation into the ergopeptine backbone. LpsA1 and A2 subunits encode the trimodular nonribosomal peptide synthetase assembling the tripeptide portion of ergopeptines. LpsA1 is responsible for formation of the major ergopeptine, ergotamine, and lpsA2 for alpha-ergocryptine, the minor ergopeptine of the total alkaloid mixture elaborated by C.purpurea. D-lysergyl-tripeptides are assembled by the nonribosomal peptide synthetases and released as N-(D-lysergyl-aminoacyl)-lactams. Cyclolization of the D-lysergyl-tripeptides is performed by the Fe(2+)/2-ketoglutarate-dependent dioxygenase easH which introduces a hydroxyl group into N-(D-lysergyl-aminoacyl)-lactam at alpha-C of the aminoacyl residue followed by spontaneous condensation with the terminal lactam carbonyl group. The sequence is that of Dioxygenase easH from Claviceps purpurea (strain 20.1) (Ergot fungus).